The primary structure comprises 1090 residues: Leucine--tRNA ligase, cytoplasmic (1090 aa).

N-acetylserine is present on Ser-2. The 'HIGH' region motif lies at Pro-66–His-76. Residue Thr-142 is modified to Phosphothreonine. The short motif at Lys-729–Ser-733 is the 'KMSKS' region element. Lys-732 lines the ATP pocket.

This sequence belongs to the class-I aminoacyl-tRNA synthetase family.

The protein localises to the cytoplasm. It catalyses the reaction tRNA(Leu) + L-leucine + ATP = L-leucyl-tRNA(Leu) + AMP + diphosphate. The polypeptide is Leucine--tRNA ligase, cytoplasmic (CDC60) (Saccharomyces cerevisiae (strain ATCC 204508 / S288c) (Baker's yeast)).